The sequence spans 225 residues: UPF0758 protein BcerKBAB4_4299 (225 aa).

Residues 103–225 (SIRSPEDCAS…FVSLKEKGHI (123 aa)) form the MPN domain. Zn(2+)-binding residues include His-174, His-176, and Asp-187. The JAMM motif signature appears at 174–187 (HNHPSGDPAPSRED).

This sequence belongs to the UPF0758 family.

In Bacillus mycoides (strain KBAB4) (Bacillus weihenstephanensis), this protein is UPF0758 protein BcerKBAB4_4299.